The primary structure comprises 386 residues: Patatin-14 (386 aa).

The signal sequence occupies residues 1 to 23 (MATTKSFLILFFMILATTSSTCA). One can recognise a PNPLA domain in the interval 32–229 (LSIDGGGIKG…TVGDPALLSL (198 aa)). The GXGXXG motif lies at 36–41 (GGGIKG). The short motif at 75–79 (GTSTG) is the GXSXG element. Ser77 serves as the catalytic Nucleophile. Asn115 carries an N-linked (GlcNAc...) asparagine glycan. Asp215 functions as the Proton acceptor in the catalytic mechanism. The DGA/G signature appears at 215-217 (DGG). Positions 321 to 381 (ENALTGTTTE…LLSDRKKLRA (61 aa)) form a coiled coil.

The protein belongs to the patatin family. As to expression, tuber.

The protein resides in the vacuole. Its function is as follows. Probable lipolytic acyl hydrolase (LAH), an activity which is thought to be involved in the response of tubers to pathogens. This is Patatin-14 from Solanum tuberosum (Potato).